A 235-amino-acid polypeptide reads, in one-letter code: Hydroxyacylglutathione hydrolase (235 aa).

Positions 53, 55, 57, 58, 109, 127, and 165 each coordinate Zn(2+).

The protein belongs to the metallo-beta-lactamase superfamily. Glyoxalase II family. In terms of assembly, monomer. Zn(2+) serves as cofactor.

The catalysed reaction is an S-(2-hydroxyacyl)glutathione + H2O = a 2-hydroxy carboxylate + glutathione + H(+). Its pathway is secondary metabolite metabolism; methylglyoxal degradation; (R)-lactate from methylglyoxal: step 2/2. Its function is as follows. Thiolesterase that catalyzes the hydrolysis of S-D-lactoyl-glutathione to form glutathione and D-lactic acid. The polypeptide is Hydroxyacylglutathione hydrolase (Haemophilus ducreyi (strain 35000HP / ATCC 700724)).